Consider the following 249-residue polypeptide: Acidic leucine-rich nuclear phosphoprotein 32 family member A (249 aa).

Thr15 is modified (phosphothreonine). A Phosphoserine modification is found at Ser17. 4 LRR repeats span residues 18–41, 43–64, 65–87, and 89–110; these read DVKELVLDNCRSIEGKIEGLTDEF, ELEFLSTINVGLTSVANLPKLN, KLKKLELSDNRISGGLEVLAEKC, and NLTHLNLSGNKIKDLSTIEPLK. An LRRCT domain is found at 123–161; sequence CEVTNLNDYRENVFKLLPQLTYLDGYDRDDKEAPDSDAE. Basic and acidic residues predominate over residues 147–156; sequence GYDRDDKEAP. The segment at 147-249 is disordered; the sequence is GYDRDDKEAP…EPXDXGEDDD (103 aa). The necessary for tumor-suppressive function stretch occupies residues 150–174; it reads RDDKEAPDSDAEGYVEGLDDDEEDE. Residues 157–230 show a composition bias toward acidic residues; it reads DSDAEGYVEG…DEEDEEDVGE (74 aa). A phosphoserine mark is found at Ser158 and Ser204. Residues 165–249 form an interaction with E4F1 region; sequence EGLDDDEEDE…EPXDXGEDDD (85 aa).

The protein belongs to the ANP32 family. As to quaternary structure, component of the SET complex, composed of at least ANP32A, APEX1, HMGB2, NME1, SET and TREX1. Directly interacts with SET. Interacts with ATXN1/SCA1. Interacts with MAP1B. Interacts with ELAVL1. Part of the INHAT (inhibitor of histone acetyltransferases) complex. Interacts with E4F1. Phosphorylated on serine residues, at least in part by casein kinase 2/CK2. In terms of processing, some glutamate residues are glycylated by TTLL8. This modification occurs exclusively on glutamate residues and results in a glycine chain on the gamma-carboxyl group.

The protein resides in the nucleus. Its subcellular location is the cytoplasm. It is found in the endoplasmic reticulum. Functionally, multifunctional protein that is involved in the regulation of many processes including tumor suppression, apoptosis, cell cycle progression or transcription. Promotes apoptosis by favouring the activation of caspase-9/CASP9 and allowing apoptosome formation. In addition, plays a role in the modulation of histone acetylation and transcription as part of the INHAT (inhibitor of histone acetyltransferases) complex. Inhibits the histone-acetyltranferase activity of EP300/CREBBP (CREB-binding protein) and EP300/CREBBP-associated factor by histone masking. Preferentially binds to unmodified histone H3 and sterically inhibiting its acetylation and phosphorylation leading to cell growth inhibition. Participates in other biochemical processes such as regulation of mRNA nuclear-to-cytoplasmic translocation and stability by its association with ELAVL1 (Hu-antigen R). Plays a role in E4F1-mediated transcriptional repression as well as inhibition of protein phosphatase 2A. In Canis lupus familiaris (Dog), this protein is Acidic leucine-rich nuclear phosphoprotein 32 family member A (ANP32A).